The chain runs to 264 residues: Thiazole synthase (264 aa).

Lys106 functions as the Schiff-base intermediate with DXP in the catalytic mechanism. 1-deoxy-D-xylulose 5-phosphate contacts are provided by residues Gly167, 193–194, and 215–216; these read AG and NS.

This sequence belongs to the ThiG family. As to quaternary structure, homotetramer. Forms heterodimers with either ThiH or ThiS.

The protein resides in the cytoplasm. It catalyses the reaction [ThiS sulfur-carrier protein]-C-terminal-Gly-aminoethanethioate + 2-iminoacetate + 1-deoxy-D-xylulose 5-phosphate = [ThiS sulfur-carrier protein]-C-terminal Gly-Gly + 2-[(2R,5Z)-2-carboxy-4-methylthiazol-5(2H)-ylidene]ethyl phosphate + 2 H2O + H(+). It functions in the pathway cofactor biosynthesis; thiamine diphosphate biosynthesis. Its function is as follows. Catalyzes the rearrangement of 1-deoxy-D-xylulose 5-phosphate (DXP) to produce the thiazole phosphate moiety of thiamine. Sulfur is provided by the thiocarboxylate moiety of the carrier protein ThiS. In vitro, sulfur can be provided by H(2)S. The polypeptide is Thiazole synthase (Pseudomonas fluorescens (strain SBW25)).